The primary structure comprises 254 residues: Probable pectate lyase E (254 aa).

The first 17 residues, 1-17, serve as a signal peptide directing secretion; it reads MYQPLLLLPLLLTSAFA. N-linked (GlcNAc...) asparagine glycosylation is present at N175. Residues 228–254 form a disordered region; the sequence is DNNKKEPAKKSSGPSNACKYKEPLASC.

The protein belongs to the polysaccharide lyase 3 family. Ca(2+) is required as a cofactor.

The protein localises to the secreted. The catalysed reaction is Eliminative cleavage of (1-&gt;4)-alpha-D-galacturonan to give oligosaccharides with 4-deoxy-alpha-D-galact-4-enuronosyl groups at their non-reducing ends.. Functionally, pectinolytic enzyme consist of four classes of enzymes: pectin lyase, polygalacturonase, pectin methylesterase and rhamnogalacturonase. Among pectinolytic enzymes, pectin lyase is the most important in depolymerization of pectin, since it cleaves internal glycosidic bonds of highly methylated pectins. Favors pectate, the anion, over pectin, the methyl ester. The sequence is that of Probable pectate lyase E (plyE) from Aspergillus fumigatus (strain ATCC MYA-4609 / CBS 101355 / FGSC A1100 / Af293) (Neosartorya fumigata).